Here is a 601-residue protein sequence, read N- to C-terminus: Probable HECT-type ubiquitin ligase-interacting protein creD (601 aa).

Disordered stretches follow at residues 374–397 (EVDP…GTLS) and 455–489 (SADY…DHDH). The segment covering 461 to 473 (PSSGSNSHSPASP) has biased composition (low complexity). Residues 475-489 (LSRRPSDEGYHDHDH) are compositionally biased toward basic and acidic residues.

This sequence belongs to the arrestin family. As to quaternary structure, interacts with hulA.

Component of the regulatory network controlling carbon source utilization through ubiquitination and deubiquitination involving creA, creB, creC, creD and acrB. May be involved in signaling by recognizing appropriately phosphorylated substrates via its arrestin domains and then recruit a HECT-type ubiquitin ligase such as hulA, leading to ubiquitination of the substrate, providing a link between ubiquitination and phosphorylation in protein regulation and stability. The protein is Probable HECT-type ubiquitin ligase-interacting protein creD (creD) of Neosartorya fischeri (strain ATCC 1020 / DSM 3700 / CBS 544.65 / FGSC A1164 / JCM 1740 / NRRL 181 / WB 181) (Aspergillus fischerianus).